The following is a 447-amino-acid chain: Zinc finger protein ZIC 1 (447 aa).

A C2H2-type 1; atypical zinc finger spans residues 225-260 (LICKWIEPEQLANPKKSCNKTFSTMHELVTHVTVEH). A C2H2-type 2; atypical zinc finger spans residues 269–296 (HICFWEECPREGKPFKAKYKLVNHIRVH). 3 C2H2-type zinc fingers span residues 302–326 (FPCP…KRTH), 332–356 (FKCE…MHVH), and 362–384 (YLCK…MKVH). The tract at residues 375 to 431 (SSLRKHMKVHESSSQGSQPSPAASSGYESSTPPTIVSPSTDNPTTSSLSPSSSAVHH) is disordered. Residues 386–427 (SSSQGSQPSPAASSGYESSTPPTIVSPSTDNPTTSSLSPSSS) show a composition bias toward low complexity.

This sequence belongs to the GLI C2H2-type zinc-finger protein family. Interacts (via the C2H2-type domains 3, 4 and 5) with MDFIC (via the C2H2-type domains 3, 4 and 5). Interacts with GLI1; the interaction enhances transcription activation. Interacts with GLI2. Interacts with GLI3; the interaction enhances transcription activation. CNS. A high level expression is seen in the cerebellum. Detected in the nuclei of the cerebellar granule cell lineage from the progenitor cells of the external germinal layer to the postmigrated cells of the internal granular layer. Detected in medulloblastoma (26/29 cases), but not present in all other tumors examined.

It localises to the nucleus. The protein localises to the cytoplasm. Acts as a transcriptional activator. Involved in neurogenesis. Plays important roles in the early stage of organogenesis of the CNS, as well as during dorsal spinal cord development and maturation of the cerebellum. Involved in the spatial distribution of mossy fiber (MF) neurons within the pontine gray nucleus (PGN). Plays a role in the regulation of MF axon pathway choice. Promotes MF migration towards ipsilaterally-located cerebellar territories. May have a role in shear flow mechanotransduction in osteocytes. Retains nuclear GLI1 and GLI3 in the cytoplasm. Binds to the minimal GLI-consensus sequence 5'-TGGGTGGTC-3'. This is Zinc finger protein ZIC 1 (ZIC1) from Homo sapiens (Human).